The primary structure comprises 296 residues: Acetylglutamate kinase (296 aa).

Residues 67–68 (GG), arginine 89, and asparagine 194 each bind substrate.

Belongs to the acetylglutamate kinase family. ArgB subfamily.

The protein resides in the cytoplasm. The enzyme catalyses N-acetyl-L-glutamate + ATP = N-acetyl-L-glutamyl 5-phosphate + ADP. The protein operates within amino-acid biosynthesis; L-arginine biosynthesis; N(2)-acetyl-L-ornithine from L-glutamate: step 2/4. In terms of biological role, catalyzes the ATP-dependent phosphorylation of N-acetyl-L-glutamate. This is Acetylglutamate kinase from Brucella canis (strain ATCC 23365 / NCTC 10854 / RM-666).